Reading from the N-terminus, the 251-residue chain is Coenzyme F420:L-glutamate ligase (251 aa).

GTP is bound by residues Leu9–Ile12, Ser38–Thr39, and Lys43. Asp113 is an a divalent metal cation binding site. A GTP-binding site is contributed by Asn116. Asp149, Thr150, and Glu207 together coordinate a divalent metal cation. Residue Ala205–Thr212 participates in GTP binding.

It belongs to the CofE family. Homodimer. Mg(2+) is required as a cofactor. Requires Mn(2+) as cofactor. The cofactor is K(+).

It catalyses the reaction oxidized coenzyme F420-0 + GTP + L-glutamate = oxidized coenzyme F420-1 + GDP + phosphate + H(+). The enzyme catalyses oxidized coenzyme F420-1 + GTP + L-glutamate = oxidized coenzyme F420-2 + GDP + phosphate + H(+). Its pathway is cofactor biosynthesis; coenzyme F420 biosynthesis. Functionally, catalyzes the GTP-dependent successive addition of two or more gamma-linked L-glutamates to the L-lactyl phosphodiester of 7,8-didemethyl-8-hydroxy-5-deazariboflavin (F420-0) to form coenzyme F420-0-glutamyl-glutamate (F420-2) or polyglutamated F420 derivatives. This chain is Coenzyme F420:L-glutamate ligase, found in Halorubrum lacusprofundi (strain ATCC 49239 / DSM 5036 / JCM 8891 / ACAM 34).